The sequence spans 227 residues: (S)-2-haloacid dehalogenase (227 aa).

Asp-10 functions as the Nucleophile in the catalytic mechanism. An (S)-2-haloacid is bound by residues 11 to 12 (LY), Arg-41, and 118 to 119 (SN). An important for catalytic activity region spans residues 175 to 180 (SSNAWD).

The protein belongs to the HAD-like hydrolase superfamily. S-2-haloalkanoic acid dehalogenase family.

The catalysed reaction is an (S)-2-haloacid + H2O = a (2R)-2-hydroxycarboxylate + a halide anion + H(+). It carries out the reaction (S)-2-chloropropanoate + H2O = (R)-lactate + chloride + H(+). Its function is as follows. Catalyzes the hydrolytic dehalogenation of small (S)-2-haloalkanoic acids to yield the corresponding (R)-2-hydroxyalkanoic acids. Acts on acids of short chain lengths, C(2) to C(4), with inversion of configuration at C-2. Active with 2-halogenated carboxylic acids and converts only the S-isomer (or L-isomer) of 2-chloropropionic acid with inversion of configuration to produce R-lactate (or D-isomer). The protein is (S)-2-haloacid dehalogenase (dhl VII) of Pseudomonas fluorescens.